A 397-amino-acid chain; its full sequence is 42.8 kDa protein in whiE locus (397 aa).

Residues 1 to 22 (MTVSPVVATDAPSTDATRTTAT) are disordered. A compositionally biased stretch (low complexity) spans 8–22 (ATDAPSTDATRTTAT). The ABM domain maps to 46–137 (VRVVLMLDVH…DTHSLRYSVL (92 aa)).

It belongs to the SchA/CurD family.

The sequence is that of 42.8 kDa protein in whiE locus from Streptomyces coelicolor (strain ATCC BAA-471 / A3(2) / M145).